The primary structure comprises 126 residues: MLLNIAVICLAACVGALMRWGFALWLNPGGLIPWGTLAVNLIGGYCIGIALAVFTSRPDIDPAWRLLVITGFLGTLTTFSSFSGEVVTMLMQQRFGLAFGTIALHLGGSLALTWAGMRSALWWLAR.

4 helical membrane-spanning segments follow: residues 5–25 (IAVI…FALW), 34–54 (WGTL…LAVF), 67–87 (LVIT…GEVV), and 95–115 (FGLA…LTWA). Residues Gly-74 and Thr-77 each contribute to the Na(+) site.

The protein belongs to the fluoride channel Fluc/FEX (TC 1.A.43) family.

It is found in the cell inner membrane. It carries out the reaction fluoride(in) = fluoride(out). Its activity is regulated as follows. Na(+) is not transported, but it plays an essential structural role and its presence is essential for fluoride channel function. Functionally, fluoride-specific ion channel. Important for reducing fluoride concentration in the cell, thus reducing its toxicity. This Paracidovorax citrulli (strain AAC00-1) (Acidovorax citrulli) protein is Fluoride-specific ion channel FluC.